The primary structure comprises 120 residues: MFTKADKNKARKKRHLRIRKRVIGTTIRPRLNVFRSSKHIYAQLIDDATGVTLVSASSLDKELGLNNGANVEAATAVGTLIAKRAQEKGATEVIFDRGGYIYHGRIKALAEAAREAGLQF.

It belongs to the universal ribosomal protein uL18 family. As to quaternary structure, part of the 50S ribosomal subunit; part of the 5S rRNA/L5/L18/L25 subcomplex. Contacts the 5S and 23S rRNAs.

Functionally, this is one of the proteins that bind and probably mediate the attachment of the 5S RNA into the large ribosomal subunit, where it forms part of the central protuberance. The sequence is that of Large ribosomal subunit protein uL18 from Brevibacillus brevis (strain 47 / JCM 6285 / NBRC 100599).